Reading from the N-terminus, the 248-residue chain is Probable transcriptional regulatory protein OCAR_7305/OCA5_c08120 (248 aa).

This sequence belongs to the TACO1 family.

The protein localises to the cytoplasm. The protein is Probable transcriptional regulatory protein OCAR_7305/OCA5_c08120 of Afipia carboxidovorans (strain ATCC 49405 / DSM 1227 / KCTC 32145 / OM5) (Oligotropha carboxidovorans).